The sequence spans 51 residues: Mating pheromone Er-23 (51 aa).

5 disulfide bridges follow: Cys3/Cys24, Cys6/Cys16, Cys13/Cys47, Cys27/Cys40, and Cys35/Cys51.

It is found in the secreted. Its function is as follows. Mating ciliate pheromones (or gamones) are diffusible extracellular communication signals that distinguish different intraspecific classes of cells commonly referred to as 'mating types'. They prepare the latter for conjugation by changing their cell surface properties. The chain is Mating pheromone Er-23 (MAT23) from Euplotes raikovi.